The following is a 154-amino-acid chain: Protein X (154 aa).

The tract at residues 68–117 (PCALRFTSARRMETTVNAHRNLPKVLHKRTLGLSAMSTTDLEAYFKDCVF) is mitochondrial targeting sequence.

Belongs to the orthohepadnavirus protein X family. In terms of assembly, may form homodimer. May interact with host CEBPA, CFLAR, CREB1, DDB1, E4F1, HBXIP, HSPD1/HSP60, NFKBIA, POLR2E and SMAD4. Interacts with host SMC5-SMC6 complex and induces its degradation. Interacts with host TRPC4AP; leading to prevent ubiquitination of TRPC4AP. Interacts with host PLSCR1; this interaction promotes ubiquitination and degradation of HBx and impairs HBx-mediated cell proliferation. Post-translationally, a fraction may be phosphorylated in insect cells and HepG2 cells, a human hepatoblastoma cell line. Phosphorylated in vitro by host protein kinase C or mitogen-activated protein kinase. N-acetylated in insect cells.

It localises to the host cytoplasm. The protein localises to the host nucleus. It is found in the host mitochondrion. Its function is as follows. Multifunctional protein that plays a role in silencing host antiviral defenses and promoting viral transcription. Does not seem to be essential for HBV infection. May be directly involved in development of cirrhosis and liver cancer (hepatocellular carcinoma). Most of cytosolic activities involve modulation of cytosolic calcium. The effect on apoptosis is controversial depending on the cell types in which the studies have been conducted. May induce apoptosis by localizing in mitochondria and causing loss of mitochondrial membrane potential. May also modulate apoptosis by binding host CFLAR, a key regulator of the death-inducing signaling complex (DISC). Promotes viral transcription by using the host E3 ubiquitin ligase DDB1 to target the SMC5-SMC6 complex to proteasomal degradation. This host complex would otherwise bind to viral episomal DNA, and prevents its transcription. Moderately stimulates transcription of many different viral and cellular transcription elements. Promoters and enhancers stimulated by HBx contain DNA binding sites for NF-kappa-B, AP-1, AP-2, c-EBP, ATF/CREB, or the calcium-activated factor NF-AT. The sequence is that of Protein X from Homo sapiens (Human).